The primary structure comprises 284 residues: Diaminopimelate epimerase (284 aa).

Residues asparagine 20, glutamine 53, and asparagine 73 each contribute to the substrate site. Cysteine 82 serves as the catalytic Proton donor. Residues glycine 83 to asparagine 84, asparagine 167, asparagine 200, and glutamate 218 to arginine 219 contribute to the substrate site. Residue cysteine 227 is the Proton acceptor of the active site. Glycine 228–serine 229 contacts substrate.

Belongs to the diaminopimelate epimerase family. Homodimer.

Its subcellular location is the cytoplasm. It carries out the reaction (2S,6S)-2,6-diaminopimelate = meso-2,6-diaminopimelate. Its pathway is amino-acid biosynthesis; L-lysine biosynthesis via DAP pathway; DL-2,6-diaminopimelate from LL-2,6-diaminopimelate: step 1/1. Catalyzes the stereoinversion of LL-2,6-diaminopimelate (L,L-DAP) to meso-diaminopimelate (meso-DAP), a precursor of L-lysine and an essential component of the bacterial peptidoglycan. In Xanthomonas campestris pv. campestris (strain ATCC 33913 / DSM 3586 / NCPPB 528 / LMG 568 / P 25), this protein is Diaminopimelate epimerase.